The primary structure comprises 262 residues: Ribosomal RNA small subunit methyltransferase A (262 aa).

Residues His-16, Leu-18, Gly-43, Glu-64, Asp-89, and Asn-109 each contribute to the S-adenosyl-L-methionine site.

This sequence belongs to the class I-like SAM-binding methyltransferase superfamily. rRNA adenine N(6)-methyltransferase family. RsmA subfamily.

It is found in the cytoplasm. The enzyme catalyses adenosine(1518)/adenosine(1519) in 16S rRNA + 4 S-adenosyl-L-methionine = N(6)-dimethyladenosine(1518)/N(6)-dimethyladenosine(1519) in 16S rRNA + 4 S-adenosyl-L-homocysteine + 4 H(+). Its function is as follows. Specifically dimethylates two adjacent adenosines (A1518 and A1519) in the loop of a conserved hairpin near the 3'-end of 16S rRNA in the 30S particle. May play a critical role in biogenesis of 30S subunits. The protein is Ribosomal RNA small subunit methyltransferase A of Xanthomonas axonopodis pv. citri (strain 306).